The following is a 279-amino-acid chain: Probable flavonol synthase 4 (279 aa).

The disordered stretch occupies residues 1–25; sequence MEVERDQHKPPLSLQNNKIPSSQNF. Positions 13-25 are enriched in polar residues; sequence SLQNNKIPSSQNF. Residues 156-256 form the Fe2OG dioxygenase domain; that stretch reads GAGYLMKINY…RMSSVVHIKP (101 aa). 164-166 serves as a coordination point for 2-oxoglutarate; it reads NYY. Fe cation is bound by residues His181, Asp183, and His237. 247 to 249 is a 2-oxoglutarate binding site; sequence RMS.

The protein belongs to the iron/ascorbate-dependent oxidoreductase family. It depends on Fe(2+) as a cofactor.

It carries out the reaction a (2R,3R)-dihydroflavonol + 2-oxoglutarate + O2 = a flavonol + succinate + CO2 + H2O. It participates in secondary metabolite biosynthesis; flavonoid biosynthesis. This Arabidopsis thaliana (Mouse-ear cress) protein is Probable flavonol synthase 4 (FLS4).